The sequence spans 147 residues: Hemoglobin subunit gamma-2 (147 aa).

The Globin domain maps to 3–147 (HFTEEDKATI…VASALSSRYH (145 aa)). At Thr13 the chain carries Phosphothreonine. A phosphoserine mark is found at Ser45, Ser51, and Ser53. Residue Lys60 is modified to N6-acetyllysine. His64 contacts heme b. Lys83 bears the N6-acetyllysine mark. Residue His93 participates in heme b binding. Residue Cys94 is modified to S-nitrosocysteine. A phosphoserine mark is found at Ser140, Ser143, and Ser144.

The protein belongs to the globin family. As to quaternary structure, heterotetramer of two alpha chains and two gamma chains in fetal hemoglobin (Hb F). Red blood cells.

Functionally, gamma chains make up the fetal hemoglobin F, in combination with alpha chains. The chain is Hemoglobin subunit gamma-2 (HBG2) from Hylobates lar (Lar gibbon).